We begin with the raw amino-acid sequence, 509 residues long: Putative ATP-dependent RNA helicase QP509L (509 aa).

The 153-residue stretch at 110–262 (KKLLPPYGRF…KIIIHHLGQP (153 aa)) folds into the Helicase ATP-binding domain. Position 123 to 130 (123 to 130 (LNTGLGKT)) interacts with ATP. The short motif at 215–218 (DEAH) is the DEAH box element.

It belongs to the DEAD box helicase family. DEAH subfamily.

It carries out the reaction ATP + H2O = ADP + phosphate + H(+). The polypeptide is Putative ATP-dependent RNA helicase QP509L (African swine fever virus (isolate Tick/Malawi/Lil 20-1/1983) (ASFV)).